Here is a 73-residue protein sequence, read N- to C-terminus: Alpha-amylase inhibitor Paim-1 (73 aa).

Disulfide bonds link cysteine 8–cysteine 24 and cysteine 42–cysteine 70.

Its function is as follows. Inhibits mammalian alpha-amylases specifically but has no action on plant and microbial alpha-amylases. This is Alpha-amylase inhibitor Paim-1 from Streptomyces olivaceoviridis (Streptomyces corchorusii).